Reading from the N-terminus, the 233-residue chain is Ubiquitin carboxyl-terminal hydrolase isozyme L4 (233 aa).

In terms of domain architecture, UCH catalytic spans 5–232 (RWLPLEANPE…LRFNAIALSA (228 aa)). Residues 8 to 13 (PLEANP) form an interaction with ubiquitin region. Cys95 (nucleophile) is an active-site residue. Ser133 is subject to Phosphoserine. The active-site Proton donor is the His172. The tract at residues 222–227 (ELRFNA) is interaction with ubiquitin.

The protein belongs to the peptidase C12 family. As to expression, expressed in various tissues at low level.

The protein localises to the cytoplasm. It carries out the reaction Thiol-dependent hydrolysis of ester, thioester, amide, peptide and isopeptide bonds formed by the C-terminal Gly of ubiquitin (a 76-residue protein attached to proteins as an intracellular targeting signal).. Ubiquitin-protein hydrolase is involved both in the processing of ubiquitin precursors and of ubiquitinated proteins. This enzyme is a thiol protease that recognizes and hydrolyzes a peptide bond at the C-terminal glycine of ubiquitin. The protein is Ubiquitin carboxyl-terminal hydrolase isozyme L4 (Uchl4) of Mus musculus (Mouse).